The primary structure comprises 127 residues: Large ribosomal subunit protein bL17 (127 aa).

The protein belongs to the bacterial ribosomal protein bL17 family. Part of the 50S ribosomal subunit. Contacts protein L32.

The polypeptide is Large ribosomal subunit protein bL17 (Fervidobacterium nodosum (strain ATCC 35602 / DSM 5306 / Rt17-B1)).